A 154-amino-acid chain; its full sequence is Iron-sulfur cluster assembly 2 homolog, mitochondrial (154 aa).

A mitochondrion-targeting transit peptide spans 1–8 (MAAAWGSS). A disordered region spans residues 29-49 (SLGPQARREASSSSPEAGEGQ). A compositionally biased stretch (low complexity) spans 39–49 (SSSSPEAGEGQ). Fe cation contacts are provided by Cys-79, Cys-144, and Cys-146.

This sequence belongs to the HesB/IscA family. Heterotetramer; forms a dimer of dimers with IBA57. Interacts with [2Fe-2S]-ISCA2 forming the heterodimer [2Fe- 2S]-ISCA2-IBA57 complex; [2Fe-2S] cluster binding is absolutely required to promote the complex formation.

It localises to the mitochondrion. Involved in the maturation of mitochondrial 4Fe-4S proteins functioning late in the iron-sulfur cluster assembly pathway. May be involved in the binding of an intermediate of Fe/S cluster assembly. This is Iron-sulfur cluster assembly 2 homolog, mitochondrial (ISCA2) from Homo sapiens (Human).